The chain runs to 227 residues: 2-C-methyl-D-erythritol 4-phosphate cytidylyltransferase (227 aa).

The protein belongs to the IspD/TarI cytidylyltransferase family. IspD subfamily.

The enzyme catalyses 2-C-methyl-D-erythritol 4-phosphate + CTP + H(+) = 4-CDP-2-C-methyl-D-erythritol + diphosphate. It participates in isoprenoid biosynthesis; isopentenyl diphosphate biosynthesis via DXP pathway; isopentenyl diphosphate from 1-deoxy-D-xylulose 5-phosphate: step 2/6. Functionally, catalyzes the formation of 4-diphosphocytidyl-2-C-methyl-D-erythritol from CTP and 2-C-methyl-D-erythritol 4-phosphate (MEP). The sequence is that of 2-C-methyl-D-erythritol 4-phosphate cytidylyltransferase from Caldanaerobacter subterraneus subsp. tengcongensis (strain DSM 15242 / JCM 11007 / NBRC 100824 / MB4) (Thermoanaerobacter tengcongensis).